The chain runs to 134 residues: Kinetochore-binding protein 3 (134 aa).

The protein localises to the nucleus. The protein resides in the chromosome. Its subcellular location is the centromere. It localises to the kinetochore. This chain is Kinetochore-binding protein 3 (kbp-3), found in Caenorhabditis elegans.